Consider the following 534-residue polypeptide: CTP synthase (534 aa).

Residues 1 to 265 form an amidoligase domain region; sequence MKYIVVTGGV…TTQLMKHLRL (265 aa). Residue serine 12 coordinates CTP. Residue serine 12 participates in UTP binding. 13–18 is a binding site for ATP; it reads GLGKGI. Tyrosine 53 contributes to the L-glutamine binding site. Residue aspartate 70 coordinates ATP. The Mg(2+) site is built by aspartate 70 and glutamate 140. CTP is bound by residues 147 to 149, 186 to 191, and lysine 222; these read DIE and KTKPTQ. UTP contacts are provided by residues 186–191 and lysine 222; that span reads KTKPTQ. Residues 289-530 form the Glutamine amidotransferase type-1 domain; sequence KLAIVGKYTN…VRAMCKYRKE (242 aa). Position 352 (glycine 352) interacts with L-glutamine. Cysteine 379 serves as the catalytic Nucleophile; for glutamine hydrolysis. L-glutamine-binding positions include 380–383, glutamate 403, and arginine 460; that span reads LGMQ. Active-site residues include histidine 503 and glutamate 505.

It belongs to the CTP synthase family. In terms of assembly, homotetramer.

It catalyses the reaction UTP + L-glutamine + ATP + H2O = CTP + L-glutamate + ADP + phosphate + 2 H(+). The enzyme catalyses L-glutamine + H2O = L-glutamate + NH4(+). The catalysed reaction is UTP + NH4(+) + ATP = CTP + ADP + phosphate + 2 H(+). The protein operates within pyrimidine metabolism; CTP biosynthesis via de novo pathway; CTP from UDP: step 2/2. Allosterically activated by GTP, when glutamine is the substrate; GTP has no effect on the reaction when ammonia is the substrate. The allosteric effector GTP functions by stabilizing the protein conformation that binds the tetrahedral intermediate(s) formed during glutamine hydrolysis. Inhibited by the product CTP, via allosteric rather than competitive inhibition. In terms of biological role, catalyzes the ATP-dependent amination of UTP to CTP with either L-glutamine or ammonia as the source of nitrogen. Regulates intracellular CTP levels through interactions with the four ribonucleotide triphosphates. The polypeptide is CTP synthase (Methanosarcina mazei (strain ATCC BAA-159 / DSM 3647 / Goe1 / Go1 / JCM 11833 / OCM 88) (Methanosarcina frisia)).